The sequence spans 556 residues: MPVHATPAAESQIISKPEVVRRTANFKPSVWGDRFANYAEDIITQTQMQEQVEELKQVVRKEVFTNAADDSSHQLKLIDEIQRLGVAYHFESEIDQALERIHETYQDIHDGGDLYNVALRFRLLRRHGYNVSCDVFNKFKDTNGDYKKSLVTDLSGMLSFYEAAHLRVHGEKLLEEALVFTTTHLQSASAKSSLLKTQITEAVERPLLKTMERLGARRYMSIYQDEASYSENLLKLAKLDFNVVQCLHKKELSDILRWYKELDFARRMPFARDRIVELFFWIAGIYFEPEYVFGRHILTKLIEITTVMDDMYDAFGTFEELVILTEAIDRWDASCMDQLPDYMQPFYITLLDVIDEVEEELTKQGRSYRIHYAKEIMKNQARLYFAEAIWFHEGCTPKMDGYMRVAASSVGNTMLSVVSLVGMGDIITKFEFEWLTNEPKILRASNTIFRLMDDIAGYKFEKERGHVASSIDCYMNEYGVSEQETIDIFNKRIVDSWKDINEEFLRPTAAPVPVLNRVLNLTRVVDLLYKRGDAFTHVGKLMKDCIAAMFIDPVPL.

Asp-309, Asp-313, Asp-453, and Glu-461 together coordinate Mg(2+). Residues 309 to 313 carry the DDXXD motif motif; that stretch reads DDMYD.

The protein belongs to the terpene synthase family. Tpsa subfamily. It depends on Mg(2+) as a cofactor. The cofactor is Mn(2+). Expressed in ripe fruits and roots. Not detected in vegetative tissues.

Its subcellular location is the cytoplasm. The protein localises to the cytosol. It carries out the reaction (2E)-geranyl diphosphate = (1S,5S)-alpha-pinene + diphosphate. The protein operates within secondary metabolite biosynthesis; terpenoid biosynthesis. Its function is as follows. Monoterpene synthase catalyzing the production of (-)-alpha-pinene, beta-phellandrene and beta-myrcene as the major products. Unable to use farnesyl diphosphate as substrate. Exclusively expressed in the fruit of wild strawberries. Not detected in cultivated varieties. The polypeptide is (-)-alpha-pinene synthase (Fragaria vesca (Woodland strawberry)).